Reading from the N-terminus, the 147-residue chain is uncharacterized protein (147 aa).

Positions 44–147 (LVGYIDKEIH…LKSIKERLSI (104 aa)) constitute an HTH LytTR-type domain.

The protein localises to the cytoplasm. This is an uncharacterized protein from Staphylococcus aureus (strain COL).